A 690-amino-acid polypeptide reads, in one-letter code: Protein-glutamine gamma-glutamyltransferase 2 (690 aa).

Residue Ala2 is modified to N-acetylalanine. Cystine bridges form between Cys230/Cys370 and Cys370/Cys371. Active-site residues include Cys277, His335, and Asp358. Residues Asn398, Asp400, Glu436, Glu446, and Glu451 each contribute to the Ca(2+) site. At Lys467 the chain carries N6-acetyllysine. 479–486 (RIRVGQNM) contributes to the GTP binding site. Glu542 is a binding site for Ca(2+). 583-586 (RDIY) provides a ligand contact to GTP. Residue Gln636 forms an Isoglutamyl lysine isopeptide (Gln-Lys) (interchain with K-?) linkage.

Belongs to the transglutaminase superfamily. Transglutaminase family. Monomer. Interacts with phospholipase C; promoting alpha-1 adrenergic receptor signaling. Interacts with PLCD1. Ca(2+) serves as cofactor. In terms of processing, disulfide bond formation inactivates the calcium-dependent acyltransferase activity. Cys-370 can form disulfide bonds with both Cys-230 and Cys-371: formation of a disulfide bond between Cys-230 and Cys-370 facilitates formation of the disulfide between Cys-370 and Cys-371, which promotes inactivation of the acyltransferase activity. May also form interchain disulfids between Cys-230 and Cys-370. Ca(2+) protects against disulfide bond formation and inactivation. Post-translationally, auto-transglutaminated: Forms covalent cross-links mediated by transglutaminase between Gln-636 and the epsilon-amino group of a lysine residue of itself or HMGB1, forming homopolymers and heteropolymers, respectively. S-nitrosylated, leading to inactivation of the acyltransferase activity.

The protein localises to the cytoplasm. It is found in the cytosol. It localises to the nucleus. The protein resides in the chromosome. Its subcellular location is the secreted. The protein localises to the extracellular space. It is found in the extracellular matrix. It localises to the cell membrane. The protein resides in the mitochondrion. It carries out the reaction L-glutaminyl-[protein] + L-lysyl-[protein] = [protein]-L-lysyl-N(6)-5-L-glutamyl-[protein] + NH4(+). It catalyses the reaction L-glutaminyl-[protein] + serotonin = 5-serotonyl-L-glutamyl-[protein] + NH4(+). The catalysed reaction is L-glutaminyl-[protein] + dopamine = 5-dopaminyl-L-glutamyl-[protein] + NH4(+). The enzyme catalyses L-glutaminyl-[protein] + histamine = 5-histaminyl-L-glutamyl-[protein] + NH4(+). It carries out the reaction L-glutaminyl-[protein] + (R)-noradrenaline = 5-(R)-noradrenalinyl-L-glutamyl-[protein] + NH4(+). It catalyses the reaction L-glutaminyl-[protein] + H2O = L-glutamyl-[protein] + NH4(+). With respect to regulation, acyltransferase activity is regulated by the binding of GTP and Ca(2+): inactivated by GTP, which stabilizes its closed structure, thereby obstructing the accessibility of substrates to the active sites. In contrast, Ca(2+) acts as a cofactor by inducing conformational change to the active open form. In absence of Ca(2+), Mg(2+) may bind Ca(2+)-binding sites, promoting GTP-binding and subsequent inhibition of the acyltransferase activity. Extracellularly reduced and activated by CLIC3. In terms of biological role, calcium-dependent acyltransferase that catalyzes the formation of covalent bonds between peptide-bound glutamine and various primary amines, such as gamma-amino group of peptide-bound lysine, or mono- and polyamines, thereby producing cross-linked or aminated proteins, respectively. Involved in many biological processes, such as bone development, angiogenesis, wound healing, cellular differentiation, chromatin modification and apoptosis. Acts as a protein-glutamine gamma-glutamyltransferase by mediating the cross-linking of proteins, such as ACO2, HSPB6, FN1, HMGB1, RAP1GDS1, SLC25A4/ANT1, SPP1 and WDR54. Under physiological conditions, the protein cross-linking activity is inhibited by GTP; inhibition is relieved by Ca(2+) in response to various stresses. When secreted, catalyzes cross-linking of proteins of the extracellular matrix, such as FN1 and SPP1 resulting in the formation of scaffolds. Plays a key role during apoptosis, both by (1) promoting the cross-linking of cytoskeletal proteins resulting in condensation of the cytoplasm, and by (2) mediating cross-linking proteins of the extracellular matrix, resulting in the irreversible formation of scaffolds that stabilize the integrity of the dying cells before their clearance by phagocytosis, thereby preventing the leakage of harmful intracellular components. In addition to protein cross-linking, can use different monoamine substrates to catalyze a vast array of protein post-translational modifications: mediates aminylation of serotonin, dopamine, noradrenaline or histamine into glutamine residues of target proteins to generate protein serotonylation, dopaminylation, noradrenalinylation or histaminylation, respectively. Mediates protein serotonylation of small GTPases during activation and aggregation of platelets, leading to constitutive activation of these GTPases. Plays a key role in chromatin organization by mediating serotonylation and dopaminylation of histone H3. Catalyzes serotonylation of 'Gln-5' of histone H3 (H3Q5ser) during serotonergic neuron differentiation, thereby facilitating transcription. Acts as a mediator of neurotransmission-independent role of nuclear dopamine in ventral tegmental area (VTA) neurons: catalyzes dopaminylation of 'Gln-5' of histone H3 (H3Q5dop), thereby regulating relapse-related transcriptional plasticity in the reward system. Regulates vein remodeling by mediating serotonylation and subsequent inactivation of ATP2A2/SERCA2. Also acts as a protein deamidase by mediating the side chain deamidation of specific glutamine residues of proteins to glutamate. Catalyzes specific deamidation of protein gliadin, a component of wheat gluten in the diet. May also act as an isopeptidase cleaving the previously formed cross-links. Also able to participate in signaling pathways independently of its acyltransferase activity: acts as a signal transducer in alpha-1 adrenergic receptor-mediated stimulation of phospholipase C-delta (PLCD) activity and is required for coupling alpha-1 adrenergic agonists to the stimulation of phosphoinositide lipid metabolism. This chain is Protein-glutamine gamma-glutamyltransferase 2, found in Cavia cutleri (Guinea pig).